A 131-amino-acid polypeptide reads, in one-letter code: Agouti-signaling protein (131 aa).

An N-terminal signal peptide occupies residues M1–A20. N-linked (GlcNAc...) asparagine glycosylation occurs at N38. A disordered region spans residues K57–P104. 5 disulfides stabilise this stretch: C92–C107, C99–C113, C106–C124, C110–C131, and C115–C122. The Agouti domain occupies C92–C131.

The protein localises to the secreted. In terms of biological role, involved in the regulation of melanogenesis. The binding of ASP to MC1R precludes alpha-MSH initiated signaling and thus blocks production of cAMP, leading to a down-regulation of eumelanogenesis (brown/black pigment) and thus increasing synthesis of pheomelanin (yellow/red pigment). In Vulpes vulpes (Red fox), this protein is Agouti-signaling protein (ASIP).